The sequence spans 402 residues: 2,3-bisphosphoglycerate-independent phosphoglycerate mutase 2 (402 aa).

The protein belongs to the BPG-independent phosphoglycerate mutase family. A-PGAM subfamily.

The catalysed reaction is (2R)-2-phosphoglycerate = (2R)-3-phosphoglycerate. Its pathway is carbohydrate degradation; glycolysis; pyruvate from D-glyceraldehyde 3-phosphate: step 3/5. Functionally, catalyzes the interconversion of 2-phosphoglycerate and 3-phosphoglycerate. This chain is 2,3-bisphosphoglycerate-independent phosphoglycerate mutase 2 (apgM2), found in Methanothermobacter thermautotrophicus (strain ATCC 29096 / DSM 1053 / JCM 10044 / NBRC 100330 / Delta H) (Methanobacterium thermoautotrophicum).